The following is a 485-amino-acid chain: Calcium/manganese antiporter SLC30A10 (485 aa).

Residues 1–10 (MGRYSGKTCR) are Cytoplasmic-facing. The chain crosses the membrane as a helical span at residues 11–31 (LLFMLVLTVAFFVAELVSGYL). Over 32 to 40 (GNSIALLSD) the chain is Extracellular. The helical transmembrane segment at 41–61 (SFNMLSDLISLCVGLSAGYIA) threads the bilayer. The Cytoplasmic portion of the chain corresponds to 62–81 (RRPTRGFSATYGYARAEVVG). Residues 82–102 (ALSNAVFLTALCFTIFVEAVL) traverse the membrane as a helical segment. The Extracellular segment spans residues 103-113 (RLARPERIDDP). The chain crosses the membrane as a helical span at residues 114–134 (ELVLIVGVLGLLVNVVGLLIF). At 135 to 244 (QDCAAWFACC…ALNIRGVLLH (110 aa)) the chain is on the cytoplasmic side. Residues 167–196 (FGGPQGAEDPRRAADPTAPGSDSAVTLRGT) are disordered. The helical transmembrane segment at 245–265 (VMGDALGSVVVVITAIIFYVL) threads the bilayer. Over 266–278 (PLKSEDPCNWQCY) the chain is Extracellular. Residues 279–299 (IDPSLTVLMVIIILSSAFPLI) form a helical membrane-spanning segment. Residues 300-485 (KETAAILLQM…DQCYVNRTHF (186 aa)) lie on the Cytoplasmic side of the membrane. The required for plasma membrane localization stretch occupies residues 308–485 (QMVPKGVNME…DQCYVNRTHF (178 aa)).

This sequence belongs to the cation diffusion facilitator (CDF) transporter (TC 2.A.4) family. SLC30A subfamily. Forms homodimers. Forms heterodimers and high-molecular weight oligomers with SLC30A3, SLC30A2 and SLC30A4; heterodimerization is mediated by covalent-bound tyrosine residues, occurs probably in a tissue-specific manner and could mediate the intracellular zinc transport activity into early endosomes and recycling endosomes. In terms of tissue distribution, specifically expressed in fetal liver and fetal brain. Expressed in adult tissues with relative levels small intestine &gt; liver &gt; testes &gt; brain &gt; ovary &gt; colon &gt; cervix &gt; prostate &gt; placenta. Expressed in liver and neurons of the nervous system (at protein level).

It localises to the cell membrane. Its subcellular location is the golgi apparatus membrane. The protein localises to the recycling endosome membrane. The protein resides in the early endosome membrane. It carries out the reaction Mn(2+)(out) + Ca(2+)(in) = Mn(2+)(in) + Ca(2+)(out). It catalyses the reaction Zn(2+)(in) = Zn(2+)(out). In terms of biological role, calcium:manganese antiporter of the plasma membrane mediating the efflux of intracellular manganese coupled to an active extracellular calcium exchange. Required for intracellular manganese homeostasis, an essential cation for the function of several enzymes, including some crucially important for the metabolism of neurotransmitters and other neuronal metabolic pathways. Manganese can also be cytotoxic and induce oxidative stress, mitochondrial dysfunction and apoptosis. Could also have an intracellular zinc ion transporter activity, directly regulating intracellular zinc ion homeostasis and more indirectly various signaling pathway and biological processes. The protein is Calcium/manganese antiporter SLC30A10 of Homo sapiens (Human).